Here is a 158-residue protein sequence, read N- to C-terminus: Protein-export protein SecB (158 aa).

Belongs to the SecB family. Homotetramer, a dimer of dimers. One homotetramer interacts with 1 SecA dimer.

It localises to the cytoplasm. One of the proteins required for the normal export of preproteins out of the cell cytoplasm. It is a molecular chaperone that binds to a subset of precursor proteins, maintaining them in a translocation-competent state. It also specifically binds to its receptor SecA. The chain is Protein-export protein SecB from Pectobacterium atrosepticum (strain SCRI 1043 / ATCC BAA-672) (Erwinia carotovora subsp. atroseptica).